The chain runs to 191 residues: Ferric nitrobindin-like protein (191 aa).

The short motif at 20-26 (GNWAGAG) is the GXWXGXG element.

It belongs to the nitrobindin family.

This chain is Ferric nitrobindin-like protein, found in Streptomyces avermitilis (strain ATCC 31267 / DSM 46492 / JCM 5070 / NBRC 14893 / NCIMB 12804 / NRRL 8165 / MA-4680).